Reading from the N-terminus, the 217-residue chain is Ependymin (217 aa).

A signal peptide spans 1–20 (MHTVKLLCVVFSCLCAIGWA). Asn73 and Asn96 each carry an N-linked (GlcNAc...) asparagine glycan.

Belongs to the ependymin family. As to quaternary structure, forms disulfide-linked dimers. Post-translationally, binds calcium through the terminal sialic acids. EPDs are synthesized in the meninx and secreted in the cerebrospinal fluid.

The protein localises to the secreted. Functionally, may play a role in neural plasticity. May be involved during axon regeneration. This Danio rerio (Zebrafish) protein is Ependymin (epd).